The chain runs to 214 residues: Probable nicotinate-nucleotide adenylyltransferase (214 aa).

It belongs to the NadD family.

The catalysed reaction is nicotinate beta-D-ribonucleotide + ATP + H(+) = deamido-NAD(+) + diphosphate. It functions in the pathway cofactor biosynthesis; NAD(+) biosynthesis; deamido-NAD(+) from nicotinate D-ribonucleotide: step 1/1. In terms of biological role, catalyzes the reversible adenylation of nicotinate mononucleotide (NaMN) to nicotinic acid adenine dinucleotide (NaAD). The protein is Probable nicotinate-nucleotide adenylyltransferase of Pseudomonas aeruginosa (strain UCBPP-PA14).